The chain runs to 971 residues: E3 ubiquitin-protein ligase MIB2 (971 aa).

The region spanning 1–80 is the MIB/HERC2 1 domain; it reads MDLDPHAGVQ…AHDLLLYDNA (80 aa). Residues 86–138 form a ZZ-type zinc finger; it reads HPNIICDCCKKHGLRGMRWKCRVCFDYDLCTQCYMHNKHDLTHAFERYETSHS. Zn(2+) contacts are provided by Cys91, Cys94, Cys106, Cys109, Cys115, Cys118, His124, and His128. In terms of domain architecture, MIB/HERC2 2 spans 149 to 227; the sequence is LPRIPLRGIF…KVDLKCVGEA (79 aa). Phosphoserine is present on Ser251. 9 ANK repeats span residues 478-507, 511-540, 544-573, 577-609, 613-642, 647-677, 681-710, 714-742, and 783-812; these read QGRT…SVDL, EGNT…GVDA, TRST…DVNL, HADT…DVTA, QGFT…QLVD, DGFT…DVNV, KLQS…NVNT, EGDT…DPGP, and RGRS…ERQA. 2 consecutive RING-type zinc fingers follow at residues 848-883 and 927-960; these read CLVC…IRCQ and CPIC…PICR.

Interacts with actin monomer. In terms of processing, ubiquitinated. Possibly via autoubiquitination.

It is found in the cytoplasm. Its subcellular location is the endosome. It carries out the reaction S-ubiquitinyl-[E2 ubiquitin-conjugating enzyme]-L-cysteine + [acceptor protein]-L-lysine = [E2 ubiquitin-conjugating enzyme]-L-cysteine + N(6)-ubiquitinyl-[acceptor protein]-L-lysine.. The protein operates within protein modification; protein ubiquitination. In terms of biological role, E3 ubiquitin-protein ligase that mediates ubiquitination of Delta receptors, which act as ligands of Notch proteins. Positively regulates the Delta-mediated Notch signaling by ubiquitinating the intracellular domain of Delta, leading to endocytosis of Delta receptors. This is E3 ubiquitin-protein ligase MIB2 (Mib2) from Rattus norvegicus (Rat).